The chain runs to 334 residues: Adenosine deaminase (334 aa).

Residues H12 and H14 each coordinate Zn(2+). H14, D16, and G170 together coordinate substrate. Residue H197 coordinates Zn(2+). Residue E200 is the Proton donor of the active site. D278 contributes to the Zn(2+) binding site. D279 serves as a coordination point for substrate.

The protein belongs to the metallo-dependent hydrolases superfamily. Adenosine and AMP deaminases family. Adenosine deaminase subfamily. Zn(2+) serves as cofactor.

The enzyme catalyses adenosine + H2O + H(+) = inosine + NH4(+). The catalysed reaction is 2'-deoxyadenosine + H2O + H(+) = 2'-deoxyinosine + NH4(+). In terms of biological role, catalyzes the hydrolytic deamination of adenosine and 2-deoxyadenosine. In Vibrio parahaemolyticus serotype O3:K6 (strain RIMD 2210633), this protein is Adenosine deaminase.